Reading from the N-terminus, the 128-residue chain is Prefoldin subunit 1 (128 aa).

2 coiled-coil regions span residues 17–37 (MIELTGKLKQVQNQMRNKEGD) and 81–115 (LKDSEAAVASLQTSKEYLEKQVAEVENNLRELLQQ).

Belongs to the prefoldin subunit beta family. As to quaternary structure, heterohexamer of two PFD-alpha type and four PFD-beta type subunits forming prefoldin co-chaperone complex. Interacts with LSM8, a specific subunit of the LSM2-8 complex, which is a core component of the spliceosome.

The protein resides in the cytoplasm. It localises to the nucleus. Binds specifically to cytosolic chaperonin (c-CPN) and transfers target proteins to it. Binds to nascent polypeptide chain and promotes folding in an environment in which there are many competing pathways for nonnative proteins. Together with other chaperonins, contribute to the regulation of gene expression by modulating the spliceosome function on pre-mRNA splicing post-transcriptionally by acting as a co-chaperone of Hsp90 to control levels of LSM8. Required for microtubules (MTs) organization and dynamicity. Involved in the process leading to microtubules dissociation in response to gibberellic acid (GA) probably due to the DELLA proteins-mediated translocation of the prefoldin co-chaperone complex from the cytoplasm to the nucleus. The protein is Prefoldin subunit 1 of Arabidopsis thaliana (Mouse-ear cress).